A 520-amino-acid chain; its full sequence is Cytochrome P450 monooxygenase oblB (520 aa).

The next 3 membrane-spanning stretches (helical) occupy residues 17 to 37 (VAVISAGAFYLLNLVIYRLFL), 229 to 249 (LFMGLPWLIHVVRLIPVSILA), and 320 to 340 (IGTGTITTAGSLCFICYHIVV). Position 462 (Cys462) interacts with heme.

The protein belongs to the cytochrome P450 family. Heme serves as cofactor.

The protein resides in the membrane. The protein operates within secondary metabolite biosynthesis; terpenoid biosynthesis. Cytochrome P450 monooxygenase; part of the gene cluster that mediates the biosynthesis of the sesterterpenes ophiobolins, fungal phytotoxins with potential anti-cancer activities. The first step of the pathway is performed by the sesterterpene synthase oblA that possesses both prenyl transferase and terpene cyclase activity, converting isopentenyl diphosphate and dimethylallyl diphosphate into geranylfarnesyl diphosphate (GFPP) and further converting GFPP into ophiobolin F, respectively. Other sesterterpenoids (C(25) terpenoids) are found as minor products of oblA. It is expected that ophiobolin F is then oxidized to ophiobolin A via ophiobolin C and ophiobolin B intermediates by the combined action of the cytochrome P450 monooxygenase oblB and the FAD-dependent oxidoreductase oblC. Although oblB catalyzes multistep oxygenations at C5 and C21/C7 in a relatively efficient manner, it is unable to convert ophiobolin F to ophiobolin C and produces instead several unexpected derivatives. The chain is Cytochrome P450 monooxygenase oblB from Aspergillus clavatus (strain ATCC 1007 / CBS 513.65 / DSM 816 / NCTC 3887 / NRRL 1 / QM 1276 / 107).